The sequence spans 435 residues: BAHD acyltransferase BIA1 (435 aa).

Residues histidine 151 and aspartate 369 each act as proton acceptor in the active site.

This sequence belongs to the plant acyltransferase family. As to expression, mostly expressed in roots (particularly in the root elongation zone), and, to a lower extent, in seedling, leaves (especially in hydathodes), siliques (e.g. in developing seeds) and flowers.

It localises to the cytoplasm. Functionally, monitors brassinosteroids (BR) responses and homeostasis, particularly in the root and hypocotyl in darkness. Promotes flavonoid biosynthesis. The polypeptide is BAHD acyltransferase BIA1 (Arabidopsis thaliana (Mouse-ear cress)).